Consider the following 29-residue polypeptide: Cytochrome b6-f complex subunit 8 (29 aa).

A helical membrane pass occupies residues 3–23; sequence ILTLGWVSILALFTWSIAMVV.

Belongs to the PetN family. In terms of assembly, the 4 large subunits of the cytochrome b6-f complex are cytochrome b6, subunit IV (17 kDa polypeptide, PetD), cytochrome f and the Rieske protein, while the 4 small subunits are PetG, PetL, PetM and PetN. The complex functions as a dimer.

It is found in the cellular thylakoid membrane. Its function is as follows. Component of the cytochrome b6-f complex, which mediates electron transfer between photosystem II (PSII) and photosystem I (PSI), cyclic electron flow around PSI, and state transitions. This is Cytochrome b6-f complex subunit 8 from Microcystis aeruginosa (strain NIES-843 / IAM M-2473).